Reading from the N-terminus, the 305-residue chain is Superkiller complex protein 8 (305 aa).

WD repeat units follow at residues 14 to 57 (AHED…LEMQ), 62 to 101 (GHQL…QIRS), 104 to 143 (AGPV…KEYS), 146 to 187 (TRGK…HTLE), 188 to 227 (GHAM…LAAT), 230 to 269 (GHGS…CVHT), and 272 to 305 (DHQD…DCPI).

This sequence belongs to the SKI8 family. In terms of assembly, component of the PAF1 complex. Component of the SKI complex.

The protein resides in the nucleus. The protein localises to the cytoplasm. Functionally, component of the PAF1 complex (PAF1C) which has multiple functions during transcription by RNA polymerase II and is implicated in regulation of development and maintenance of embryonic stem cell pluripotency. PAF1C associates with RNA polymerase II through interaction with POLR2A CTD non-phosphorylated and 'Ser-2'- and 'Ser-5'-phosphorylated forms and is involved in transcriptional elongation, acting both independently and synergistically with TCEA1 and in cooperation with the DSIF complex and HTATSF1. Also acts as a component of the SKI complex, a multiprotein complex that assists the RNA-degrading exosome during the mRNA decay and quality-control pathways. The SKI complex catalyzes mRNA extraction from 80S ribosomal complexes in the 3'-5' direction and channels mRNA to the cytosolic exosome for degradation. The polypeptide is Superkiller complex protein 8 (skic8) (Xenopus laevis (African clawed frog)).